We begin with the raw amino-acid sequence, 1343 residues long: ABC multidrug transporter atrD (1343 aa).

A compositionally biased stretch (polar residues) spans M1–S10. The tract at residues M1–N67 is disordered. A compositionally biased stretch (low complexity) spans E20 to P31. Residue N99 is glycosylated (N-linked (GlcNAc...) asparagine). The next 4 helical transmembrane spans lie at I114 to F134, Y163 to I183, K235 to V255, and I263 to I283. Residues L115 to N403 enclose the ABC transmembrane type-1 1 domain. N309 carries an N-linked (GlcNAc...) asparagine glycan. Helical transmembrane passes span I339 to G359 and F366 to I386. The ABC transporter 1 domain occupies I438–A683. G473–S480 contributes to the ATP binding site. N-linked (GlcNAc...) asparagine glycosylation is present at N545. 2 consecutive transmembrane segments (helical) span residues M773–L793 and L820–F840. The ABC transmembrane type-1 2 domain occupies L774–K1063. The N-linked (GlcNAc...) asparagine glycan is linked to N872. The next 4 helical transmembrane spans lie at H887–G907, L920–L942, A1010–H1030, and F1037–F1057. The N-linked (GlcNAc...) asparagine glycan is linked to N1083. Residues I1098 to L1336 form the ABC transporter 2 domain. ATP is bound at residue G1133–S1140.

The protein belongs to the ABC transporter superfamily. ABCB family. Multidrug resistance exporter (TC 3.A.1.201) subfamily.

It is found in the cell membrane. With respect to regulation, fenamirol efflux transporter activity is inhibited by the cyclosporin derivative PSC 833, nigericin, reserpine and valinomycin. The effect of reserpine is transiant, while that of the cyclosporin derivative PSC 833, nigericin and valinomycin is proportional to the time of exposure. Cyclohexinmide has inhibitory effect only when applied prior to addition of the fungicide. In terms of biological role, pleiotropic ABC efflux transporter involved in the protection of the cells against a wide range of toxic compounds. Confers resistance to the azole fenarimol via efflux transport. May also be involved in the secretion of penicillin. This is ABC multidrug transporter atrD from Emericella nidulans (strain FGSC A4 / ATCC 38163 / CBS 112.46 / NRRL 194 / M139) (Aspergillus nidulans).